A 340-amino-acid chain; its full sequence is Ferredoxin--NADP reductase (340 aa).

FAD is bound by residues Thr20, Asp39, Gln47, Tyr52, Val92, Phe126, Asp293, and Thr334.

The protein belongs to the ferredoxin--NADP reductase type 2 family. Homodimer. FAD serves as cofactor.

It catalyses the reaction 2 reduced [2Fe-2S]-[ferredoxin] + NADP(+) + H(+) = 2 oxidized [2Fe-2S]-[ferredoxin] + NADPH. The polypeptide is Ferredoxin--NADP reductase (Gluconobacter oxydans (strain 621H) (Gluconobacter suboxydans)).